The chain runs to 215 residues: 3-demethoxyubiquinol 3-hydroxylase (215 aa).

6 residues coordinate Fe cation: Glu-64, Glu-94, His-97, Glu-146, Glu-178, and His-181.

It belongs to the COQ7 family. Fe cation is required as a cofactor.

It is found in the cell membrane. It carries out the reaction a 5-methoxy-2-methyl-3-(all-trans-polyprenyl)benzene-1,4-diol + AH2 + O2 = a 3-demethylubiquinol + A + H2O. Its pathway is cofactor biosynthesis; ubiquinone biosynthesis. In terms of biological role, catalyzes the hydroxylation of 2-nonaprenyl-3-methyl-6-methoxy-1,4-benzoquinol during ubiquinone biosynthesis. The chain is 3-demethoxyubiquinol 3-hydroxylase from Coxiella burnetii (strain CbuG_Q212) (Coxiella burnetii (strain Q212)).